The following is a 612-amino-acid chain: Elongation factor 4 (612 aa).

The tr-type G domain maps to 11-193 (KHIRNFAIVA…KVVKDIPAPS (183 aa)). Residues 23-28 (DHGKST) and 140-143 (NKID) contribute to the GTP site.

The protein belongs to the TRAFAC class translation factor GTPase superfamily. Classic translation factor GTPase family. LepA subfamily.

It localises to the cell membrane. It carries out the reaction GTP + H2O = GDP + phosphate + H(+). Functionally, required for accurate and efficient protein synthesis under certain stress conditions. May act as a fidelity factor of the translation reaction, by catalyzing a one-codon backward translocation of tRNAs on improperly translocated ribosomes. Back-translocation proceeds from a post-translocation (POST) complex to a pre-translocation (PRE) complex, thus giving elongation factor G a second chance to translocate the tRNAs correctly. Binds to ribosomes in a GTP-dependent manner. This Lactobacillus helveticus (strain DPC 4571) protein is Elongation factor 4.